Reading from the N-terminus, the 265-residue chain is TATA-box-binding protein (265 aa).

Residues 1 to 40 (MYNPSQAVPVSLHKNQDNQDGGQQRSHYPQISSQQSQSYL) are disordered. Over residues 18–29 (NQDGGQQRSHYP) the composition is skewed to polar residues. Tandem repeats lie at residues 91–167 (LQNI…ARVV) and 181–258 (IQNM…YPIL).

This sequence belongs to the TBP family. Belongs to the TFIID complex together with the TBP-associated factors (TAFs). Binds DNA as monomer.

It localises to the nucleus. Functionally, general transcription factor that functions at the core of the DNA-binding multiprotein factor TFIID. Binding of TFIID to the TATA box is the initial transcriptional step of the pre-initiation complex (PIC), playing a role in the activation of eukaryotic genes transcribed by RNA polymerase II. The protein is TATA-box-binding protein of Strongylocentrotus purpuratus (Purple sea urchin).